The primary structure comprises 293 residues: F-box only protein 6 (293 aa).

An F-box domain is found at 10-57 (LDSINELPENILLELFTHVPARQLLLNCRLVCSLWRDLIDLMTLWKRK). Residues 78 to 259 (FYFLRSLHRN…VTNSSIVVSP (182 aa)) enclose the FBA domain. Residue Ser-258 is modified to Phosphoserine. Polar residues predominate over residues 261–271 (MTRNQASSEAQ). The tract at residues 261-285 (MTRNQASSEAQPGQKHGQEEAAQSP) is disordered. Phosphoserine is present on Ser-284.

As to quaternary structure, interacts with VCP. Part of a SCF (SKP1-cullin-F-box) protein ligase complex. Interacts with CHEK1 and CUL1.

Its subcellular location is the cytoplasm. It functions in the pathway protein modification; protein ubiquitination. Functionally, substrate-recognition component of some SCF (SKP1-CUL1-F-box protein)-type E3 ubiquitin ligase complexes. Involved in endoplasmic reticulum-associated degradation pathway (ERAD) for misfolded lumenal proteins by recognizing and binding sugar chains on unfolded glycoproteins that are retrotranslocated into the cytosol and promoting their ubiquitination and subsequent degradation. Able to recognize and bind denatured glycoproteins, which are modified with not only high-mannose but also complex-type oligosaccharides. Also recognizes sulfated glycans. Also involved in DNA damage response by specifically recognizing activated CHEK1 (phosphorylated on 'Ser-345'), promoting its ubiquitination and degradation. Ubiquitination of CHEK1 is required to ensure that activated CHEK1 does not accumulate as cells progress through S phase, or when replication forks encounter transient impediments during normal DNA replication. In Homo sapiens (Human), this protein is F-box only protein 6 (FBXO6).